A 306-amino-acid polypeptide reads, in one-letter code: ADP,ATP carrier protein ER-ANT1 (306 aa).

3 Solcar repeats span residues 8 to 101 (ERFS…FKNL), 113 to 205 (KWFA…IKPI), and 213 to 299 (GNFL…LHQI). Transmembrane regions (helical) follow at residues 10 to 37 (FSADFVMGGAAAIVAKSAAAPIERVKLL), 78 to 102 (QANVIRYFPTQASNFAFKGYFKNLL), 111 to 131 (YLKWFAGNVASGSAAGATTSL), 181 to 202 (FGVSIVGITLYRGMYFGMYDTI), and 216 to 236 (LASFLLGWSITTSAGVIAYPF). ADP is bound by residues Arg83 and Lys95. Arg240 is a binding site for ADP. The interval 240–245 (RRRMML) is important for transport activity. The Nucleotide carrier signature motif motif lies at 240 to 245 (RRRMML). The chain crosses the membrane as a helical span at residues 276–296 (VTANMLLGVAGAGVLAGYDQL).

The protein belongs to the mitochondrial carrier (TC 2.A.29) family.

Its subcellular location is the endoplasmic reticulum membrane. The enzyme catalyses ADP(in) + ATP(out) = ADP(out) + ATP(in). Functionally, ADP:ATP antiporter that catalyzes the exchange of ADP and ATP across the endoplasmic reticulum membrane. This is ADP,ATP carrier protein ER-ANT1 (ER-ANT1) from Arabidopsis thaliana (Mouse-ear cress).